The primary structure comprises 445 residues: FAS-associated factor 2 (445 aa).

An N-acetylalanine modification is found at Ala-2. Residues 12 to 48 (EQTEKLLQFQDLTGIESMEQCRLALEQHNWNMEAAVQ) enclose the UBA domain. Lys-167 carries the N6-acetyllysine modification. Residues 275 to 350 (SERLEREERN…EEKERKLECL (76 aa)) are a coiled coil. Residues 300-361 (SLRADQEKER…PEPSPDDPES (62 aa)) form a disordered region. Basic and acidic residues predominate over residues 303–348 (ADQEKERKKREEKERKRRKEEEVQQQKLAEERRRQNLQEEKERKLE). In terms of domain architecture, UBX spans 357-439 (DDPESVKIIF…GLSHTEVLFV (83 aa)).

Identified in a complex that contains SEL1L, OS9, FAF2/UBXD8, UBE2J1/UBC6E and AUP1. Interacts with YOD1. Interacts (via N-terminus) with UBQLN2 (via C-terminus). Interacts with PNPLA2. Interacts with ZFAND2B; probably through VCP. Interacts with LMBR1L and UBAC2.

It is found in the cytoplasm. It localises to the lipid droplet. Its subcellular location is the endoplasmic reticulum. Its function is as follows. Plays an important role in endoplasmic reticulum-associated degradation (ERAD) that mediates ubiquitin-dependent degradation of misfolded endoplasmic reticulum proteins. By controlling the steady-state expression of the IGF1R receptor, indirectly regulates the insulin-like growth factor receptor signaling pathway. Involved in inhibition of lipid droplet degradation by binding to phospholipase PNPL2 and inhibiting its activity by promoting dissociation of PNPL2 from its endogenous activator, ABHD5 which inhibits the rate of triacylglycerol hydrolysis. Involved in stress granule disassembly: associates with ubiquitinated G3BP1 in response to heat shock, thereby promoting interaction between ubiquitinated G3BP1 and VCP, followed by G3BP1 extraction from stress granules and stress granule disassembly. The protein is FAS-associated factor 2 (Faf2) of Mus musculus (Mouse).